Here is a 246-residue protein sequence, read N- to C-terminus: 4-hydroxy-tetrahydrodipicolinate reductase (246 aa).

Residues 8–13 (GALGRM), Asp34, 74–76 (GTT), and 101–104 (APNF) each bind NAD(+). Catalysis depends on His131, which acts as the Proton donor/acceptor. Residue His132 participates in (S)-2,3,4,5-tetrahydrodipicolinate binding. The Proton donor role is filled by Lys135. 141–142 (GT) lines the (S)-2,3,4,5-tetrahydrodipicolinate pocket.

It belongs to the DapB family.

The protein localises to the cytoplasm. The enzyme catalyses (S)-2,3,4,5-tetrahydrodipicolinate + NAD(+) + H2O = (2S,4S)-4-hydroxy-2,3,4,5-tetrahydrodipicolinate + NADH + H(+). The catalysed reaction is (S)-2,3,4,5-tetrahydrodipicolinate + NADP(+) + H2O = (2S,4S)-4-hydroxy-2,3,4,5-tetrahydrodipicolinate + NADPH + H(+). It participates in amino-acid biosynthesis; L-lysine biosynthesis via DAP pathway; (S)-tetrahydrodipicolinate from L-aspartate: step 4/4. Catalyzes the conversion of 4-hydroxy-tetrahydrodipicolinate (HTPA) to tetrahydrodipicolinate. The sequence is that of 4-hydroxy-tetrahydrodipicolinate reductase from Thermobifida fusca (strain YX).